The sequence spans 329 residues: Gibberellin 2-beta-dioxygenase 1 (329 aa).

The Fe2OG dioxygenase domain maps to 165–273 (NTDSILRLNH…RVSMIYFAGP (109 aa)). His197, Asp199, and His254 together coordinate Fe cation. Arg264 is an active-site residue. Arg264 serves as a coordination point for 2-oxoglutarate.

This sequence belongs to the iron/ascorbate-dependent oxidoreductase family. GA2OX subfamily. The cofactor is Fe(2+). As to expression, preferentially expressed in flowers, siliques, and upper stems. Not expressed in the apex.

The catalysed reaction is gibberellin A1 + 2-oxoglutarate + O2 = gibberellin A8 + succinate + CO2. It functions in the pathway plant hormone biosynthesis; gibberellin biosynthesis. Catalyzes the 2-beta-hydroxylation of several biologically active gibberellins, leading to the homeostatic regulation of their endogenous level. Catabolism of gibberellins (GAs) plays a central role in plant development. Converts GA9/GA20 to GA51/GA29 and GA4/GA1 to GA34/GA8. The polypeptide is Gibberellin 2-beta-dioxygenase 1 (GA2OX1) (Arabidopsis thaliana (Mouse-ear cress)).